The primary structure comprises 306 residues: tRNA pseudouridine synthase B (306 aa).

Asp43 serves as the catalytic Nucleophile.

Belongs to the pseudouridine synthase TruB family. Type 1 subfamily.

It catalyses the reaction uridine(55) in tRNA = pseudouridine(55) in tRNA. Responsible for synthesis of pseudouridine from uracil-55 in the psi GC loop of transfer RNAs. This chain is tRNA pseudouridine synthase B, found in Heliobacterium modesticaldum (strain ATCC 51547 / Ice1).